The following is a 117-amino-acid chain: Putative membrane protein insertion efficiency factor (117 aa).

Belongs to the UPF0161 family.

It is found in the cell inner membrane. In terms of biological role, could be involved in insertion of integral membrane proteins into the membrane. The sequence is that of Putative membrane protein insertion efficiency factor from Nitrobacter winogradskyi (strain ATCC 25391 / DSM 10237 / CIP 104748 / NCIMB 11846 / Nb-255).